Consider the following 631-residue polypeptide: tRNA uridine 5-carboxymethylaminomethyl modification enzyme MnmG (631 aa).

FAD is bound by residues 13–18 (GGGHAG), V125, and S180. NAD(+) is bound at residue 273 to 287 (GPRYCPSIEDKVMRF). Position 370 (Q370) interacts with FAD.

Belongs to the MnmG family. Homodimer. Heterotetramer of two MnmE and two MnmG subunits. The cofactor is FAD.

It is found in the cytoplasm. Its function is as follows. NAD-binding protein involved in the addition of a carboxymethylaminomethyl (cmnm) group at the wobble position (U34) of certain tRNAs, forming tRNA-cmnm(5)s(2)U34. This chain is tRNA uridine 5-carboxymethylaminomethyl modification enzyme MnmG, found in Vibrio atlanticus (strain LGP32) (Vibrio splendidus (strain Mel32)).